The chain runs to 377 residues: Protein RecA (377 aa).

An ATP-binding site is contributed by Gly-66 to Thr-73. Residues Val-329 to Ser-377 are disordered. Residues Ala-342–Ser-377 are compositionally biased toward low complexity.

It belongs to the RecA family.

The protein localises to the cytoplasm. Its function is as follows. Can catalyze the hydrolysis of ATP in the presence of single-stranded DNA, the ATP-dependent uptake of single-stranded DNA by duplex DNA, and the ATP-dependent hybridization of homologous single-stranded DNAs. It interacts with LexA causing its activation and leading to its autocatalytic cleavage. In Streptomyces avermitilis (strain ATCC 31267 / DSM 46492 / JCM 5070 / NBRC 14893 / NCIMB 12804 / NRRL 8165 / MA-4680), this protein is Protein RecA.